A 176-amino-acid polypeptide reads, in one-letter code: Urease accessory protein UreE (176 aa).

Positions alanine 147 to histidine 176 are disordered.

It belongs to the UreE family.

It localises to the cytoplasm. Its function is as follows. Involved in urease metallocenter assembly. Binds nickel. Probably functions as a nickel donor during metallocenter assembly. The sequence is that of Urease accessory protein UreE from Alcanivorax borkumensis (strain ATCC 700651 / DSM 11573 / NCIMB 13689 / SK2).